A 134-amino-acid chain; its full sequence is Small ribosomal subunit protein uS8c (134 aa).

It belongs to the universal ribosomal protein uS8 family. In terms of assembly, part of the 30S ribosomal subunit.

The protein localises to the plastid. The protein resides in the chloroplast. Its function is as follows. One of the primary rRNA binding proteins, it binds directly to 16S rRNA central domain where it helps coordinate assembly of the platform of the 30S subunit. In Arabidopsis thaliana (Mouse-ear cress), this protein is Small ribosomal subunit protein uS8c (rps8).